We begin with the raw amino-acid sequence, 116 residues long: Large ribosomal subunit protein eL18 (116 aa).

This sequence belongs to the eukaryotic ribosomal protein eL18 family. Part of the 50S ribosomal subunit. Interacts weakly with proteins L4 and L15. Has been cross-linked to L4.

Functionally, stabilizes the tertiary rRNA structure within the 23S rRNA domain (domain II) to which it binds. The polypeptide is Large ribosomal subunit protein eL18 (rpl18e) (Haloarcula marismortui (strain ATCC 43049 / DSM 3752 / JCM 8966 / VKM B-1809) (Halobacterium marismortui)).